We begin with the raw amino-acid sequence, 542 residues long: DM7 family protein GG17591 (542 aa).

Positions 415 to 430 (GETQEMDEAHPTKEES) are enriched in basic and acidic residues. A disordered region spans residues 415–443 (GETQEMDEAHPTKEESKSEEEGEVQSGSQ).

Belongs to the DM7 family.

In Drosophila erecta (Fruit fly), this protein is DM7 family protein GG17591.